Here is an 89-residue protein sequence, read N- to C-terminus: Small ribosomal subunit protein uS15 (89 aa).

Belongs to the universal ribosomal protein uS15 family. In terms of assembly, part of the 30S ribosomal subunit. Forms a bridge to the 50S subunit in the 70S ribosome, contacting the 23S rRNA.

One of the primary rRNA binding proteins, it binds directly to 16S rRNA where it helps nucleate assembly of the platform of the 30S subunit by binding and bridging several RNA helices of the 16S rRNA. Its function is as follows. Forms an intersubunit bridge (bridge B4) with the 23S rRNA of the 50S subunit in the ribosome. The sequence is that of Small ribosomal subunit protein uS15 from Pseudomonas putida (Arthrobacter siderocapsulatus).